The following is a 143-amino-acid chain: General odorant-binding protein 28a (143 aa).

The N-terminal stretch at 1–21 (MQSTPIILVAIVLLGAALVRA) is a signal peptide. Intrachain disulfides connect cysteine 38–cysteine 69, cysteine 65–cysteine 123, and cysteine 113–cysteine 132.

As to expression, expressed in antenna, mostly on the medial and posterior surface of the third antennal segment.

The protein resides in the secreted. This is General odorant-binding protein 28a (Obp28a) from Drosophila melanogaster (Fruit fly).